The chain runs to 89 residues: GVWLAVLAFALLPVLGVGQYTIQWPGTWCFISTGPGGNGTNSRQNWGNVFFASDFAILGLSALVVTFACNLATIKALVSRCRAKATASQ.

Residues 1–18 traverse the membrane as a helical segment; the sequence is GVWLAVLAFALLPVLGVG. The Extracellular segment spans residues 19–48; it reads QYTIQWPGTWCFISTGPGGNGTNSRQNWGN. N-linked (GlcNAc...) asparagine glycosylation is present at N38. A helical membrane pass occupies residues 49-74; sequence VFFASDFAILGLSALVVTFACNLATI. The Cytoplasmic segment spans residues 75–89; the sequence is KALVSRCRAKATASQ.

It belongs to the G-protein coupled receptor 1 family. As to quaternary structure, interacts (via C-terminus) with MKLN1.

The protein localises to the cell membrane. Its function is as follows. Receptor for prostaglandin E2 (PGE2). Required for normal development of fever in response to pyrinogens, including IL1B, prostaglandin E2 and bacterial lipopolysaccharide (LPS). Required for normal potentiation of platelet aggregation by prostaglandin E2, and thus plays a role in the regulation of blood coagulation. Required for increased HCO3(-) secretion in the duodenum in response to mucosal acidification, and thereby contributes to the protection of the mucosa against acid-induced ulceration. Not required for normal kidney function, normal urine volume and osmolality. This Ovis aries (Sheep) protein is Prostaglandin E2 receptor EP3 subtype (PTGER3).